Here is a 565-residue protein sequence, read N- to C-terminus: Protein priB (565 aa).

The segment at residues 20–50 is a DNA-binding region (zn(2)-C6 fungal-type); sequence CTTCRAAKMKCVGAEDGQRQCQRCKRANVQC. 2 disordered regions span residues 82–170 and 195–224; these read AKSK…SDRA and NPED…APAG. The segment covering 90 to 111 has biased composition (basic and acidic residues); that stretch reads DARHSSSYRDSHPSLGEPDDRY. Residues 129-155 are compositionally biased toward low complexity; that stretch reads SNLPPLNLPSYPDAASEYTASSTSSRT. A compositionally biased stretch (polar residues) spans 203 to 215; that stretch reads GPSSVRCSETYSP.

It localises to the nucleus. The protein is Protein priB (priB) of Lentinula edodes (Shiitake mushroom).